Consider the following 281-residue polypeptide: Large ribosomal subunit protein uL2 (281 aa).

The segment at 208-281 (AGRSRYAGQR…RGRKRGPHTR (74 aa)) is disordered. Basic residues predominate over residues 254 to 281 (TVGKKTRSHKARSNKFIVRGRKRGPHTR).

This sequence belongs to the universal ribosomal protein uL2 family. In terms of assembly, part of the 50S ribosomal subunit. Forms a bridge to the 30S subunit in the 70S ribosome.

Functionally, one of the primary rRNA binding proteins. Required for association of the 30S and 50S subunits to form the 70S ribosome, for tRNA binding and peptide bond formation. It has been suggested to have peptidyltransferase activity; this is somewhat controversial. Makes several contacts with the 16S rRNA in the 70S ribosome. This Limosilactobacillus fermentum (strain NBRC 3956 / LMG 18251) (Lactobacillus fermentum) protein is Large ribosomal subunit protein uL2.